The primary structure comprises 262 residues: MQTIIRVEKLAKTFNQHQALHAVDLNIHHGEMVALLGPSGSGKSTLLRHLSGLITGDKSVGSHIELLGRTVQREGRLARDIRKSRAHTGYIFQQFNLVNRLSVLENVLIGALGSTPFWRTCFSYFTREQKQRALQALTRVGMVHFAHQRVSTLSGGQQQRVAIARALMQQAKVILADEPIASLDPESARIVMDTLRDINQNDGITVVVTLHQVDYALRYCERIVALRQGHVFYDGCSQQFDNERFDHLYRSINRVEENAKAA.

Positions 5–253 constitute an ABC transporter domain; it reads IRVEKLAKTF…RFDHLYRSIN (249 aa). 37–44 serves as a coordination point for ATP; the sequence is GPSGSGKS.

It belongs to the ABC transporter superfamily. Phosphonates importer (TC 3.A.1.9.1) family. The complex is composed of two ATP-binding proteins (PhnC), two transmembrane proteins (PhnE) and a solute-binding protein (PhnD).

The protein localises to the cell inner membrane. The enzyme catalyses phosphonate(out) + ATP + H2O = phosphonate(in) + ADP + phosphate + H(+). Part of the ABC transporter complex PhnCDE involved in phosphonates import. Responsible for energy coupling to the transport system. The sequence is that of Phosphonates import ATP-binding protein PhnC from Escherichia coli (strain UTI89 / UPEC).